A 185-amino-acid polypeptide reads, in one-letter code: dCTP deaminase (185 aa).

Residues 107–112, 131–133, Gln152, Tyr166, and Gln176 contribute to the dCTP site; these read KSTYAR and TLE. Glu133 functions as the Proton donor/acceptor in the catalytic mechanism.

The protein belongs to the dCTP deaminase family. As to quaternary structure, homotrimer.

The catalysed reaction is dCTP + H2O + H(+) = dUTP + NH4(+). It functions in the pathway pyrimidine metabolism; dUMP biosynthesis; dUMP from dCTP (dUTP route): step 1/2. In terms of biological role, catalyzes the deamination of dCTP to dUTP. The sequence is that of dCTP deaminase from Wolbachia pipientis wMel.